An 85-amino-acid polypeptide reads, in one-letter code: Omega-conotoxin-like Am6.5 (85 aa).

The signal sequence occupies residues 1–19 (MCILIVAVLFLTAWTFVMA). Residues 20–53 (DDPRDEPDTVVRGGKLFSRARDEMNPAASKLNER) constitute a propeptide that is removed on maturation. 3 disulfide bridges follow: Cys55–Cys73, Cys62–Cys77, and Cys72–Cys81. Gln84 carries the glutamine amide modification.

The protein belongs to the conotoxin O1 family. Post-translationally, is not hydroxylated. In terms of tissue distribution, expressed by the venom duct.

It is found in the secreted. Omega-conotoxins act at presynaptic membranes, they bind and block voltage-gated calcium channels (Cav). The sequence is that of Omega-conotoxin-like Am6.5 from Conus amadis (Amadis cone).